The sequence spans 450 residues: Phosphoglucosamine mutase (450 aa).

Catalysis depends on Ser102, which acts as the Phosphoserine intermediate. Residues Ser102, Asp243, Asp245, and Asp247 each coordinate Mg(2+). Ser102 bears the Phosphoserine mark.

The protein belongs to the phosphohexose mutase family. Mg(2+) is required as a cofactor. Post-translationally, activated by phosphorylation.

The enzyme catalyses alpha-D-glucosamine 1-phosphate = D-glucosamine 6-phosphate. In terms of biological role, catalyzes the conversion of glucosamine-6-phosphate to glucosamine-1-phosphate. This is Phosphoglucosamine mutase from Allorhizobium ampelinum (strain ATCC BAA-846 / DSM 112012 / S4) (Agrobacterium vitis (strain S4)).